The primary structure comprises 1438 residues: DNA-directed RNA polymerase subunit beta' (1438 aa).

The Zn(2+) site is built by cysteine 70, cysteine 72, cysteine 85, and cysteine 88. Residues aspartate 461, aspartate 463, and aspartate 465 each contribute to the Mg(2+) site. Zn(2+) contacts are provided by cysteine 821, cysteine 895, cysteine 902, and cysteine 905. Residues 1413 to 1427 show a composition bias toward low complexity; the sequence is DAMAAAMGGDSAGGD. Residues 1413 to 1438 are disordered; the sequence is DAMAAAMGGDSAGGDTKPEAPEASEE.

The protein belongs to the RNA polymerase beta' chain family. In terms of assembly, the RNAP catalytic core consists of 2 alpha, 1 beta, 1 beta' and 1 omega subunit. When a sigma factor is associated with the core the holoenzyme is formed, which can initiate transcription. It depends on Mg(2+) as a cofactor. Zn(2+) is required as a cofactor.

It catalyses the reaction RNA(n) + a ribonucleoside 5'-triphosphate = RNA(n+1) + diphosphate. Its function is as follows. DNA-dependent RNA polymerase catalyzes the transcription of DNA into RNA using the four ribonucleoside triphosphates as substrates. The polypeptide is DNA-directed RNA polymerase subunit beta' (Erythrobacter litoralis (strain HTCC2594)).